The following is a 371-amino-acid chain: Macronuclear solute carrier homolog CR-MSC (371 aa).

3 Solcar repeats span residues 16–111, 120–208, and 215–304; these read RMNY…FYDK, ARPD…CKEN, and PHWI…LSQF. 6 consecutive transmembrane segments (helical) span residues 22–42, 89–109, 126–146, 184–204, 221–241, and 281–301; these read FAAA…LDMV, TFFF…GYFY, VAAG…IDIV, AGAN…IYDW, LWGT…FDMI, and FGSF…ICYL.

The protein belongs to the mitochondrial carrier (TC 2.A.29) family.

Its subcellular location is the membrane. In Oxytricha fallax, this protein is Macronuclear solute carrier homolog CR-MSC.